Consider the following 242-residue polypeptide: MEKMENIKNNKINEIKDIENLRLTSGKIINKNVHQIGIIALGSYLENHGTVLPIDTDIKIASYIALNVAIQTGAKFLGCVLPSTEYEYVKHGIHNTPNEVVEYIDFLVEQGKKIGINKFLIINCHGGNTLINELIEELPYKSDIKLKIKNITSTHASTEELSVGYVIGIADKSKLKEHNPKDYPEIAMIGLTEARKNNKYIDNEAKIAEKKGITINEDLGNKILKNAINECILEVELLLNNK.

Positions 46, 48, 57, and 125 each coordinate Fe cation.

Belongs to the creatininase superfamily. FAPy deformylase family. Homodimer. Requires Fe(2+) as cofactor. It depends on Zn(2+) as a cofactor.

The enzyme catalyses 2-amino-5-formylamino-6-(5-phospho-D-ribosylamino)pyrimidin-4(3H)-one + H2O = 2,5-diamino-6-(1-D-ribosylamino)pyrimidin-4(3H)-one 5'-phosphate + formate + H(+). Its pathway is cofactor biosynthesis; coenzyme F420 biosynthesis. It participates in cofactor biosynthesis; riboflavin biosynthesis. Functionally, catalyzes the hydrolysis of the formamide of 2-amino-5-formylamino-6-ribosylamino-4(3H)-pyrimidinone 5'-monophosphate (FAPy) to form 2,5-diamino-6-ribosylamino-4(3H)-pyrimidinone 5'-phosphate (APy). This Methanococcus aeolicus (strain ATCC BAA-1280 / DSM 17508 / OCM 812 / Nankai-3) protein is 2-amino-5-formylamino-6-ribosylaminopyrimidin-4(3H)-one 5'-monophosphate deformylase.